The primary structure comprises 452 residues: MHQRALLFSALLTAVRAQQAGTLTEEVHPSLTWQKCTSEGSCTEQSGSVVIDSNWRWTHSVNDSTNCYTGNTWDATLCPDDETCAANCALDGADYESTYGVTTDGDSLTLKFVTGSNVGSRLYLMDTSDEGYQTFNLLDAEFTFDVDVSNLPCGLNGALYFTAMDADGGVSKYPANKAGAKYGTGYCDSQCPRDLKFIDGQANVDGWEPSSNNDNTGIGNHGSCCPEMDIWEANKISTALTPHPCDSSEQTMCEGNDCGGTYSDDRYGGTCDPDGCDFNPYRMGNDSFYGPGKTIDTGSKMTVVTQFITDGSGSLSEIKRYYVQNGNVIANADSNISGVTGNSITTDFCTAQKKAFGDEDIFAEHNGLAGISDAMSSMVLILSLWDDYYASMEWLDSDYPENATATDPGVARGTCDSESGVPATVEGAHPDSSVTFSNIKFGPINSTFSASA.

A signal peptide spans 1 to 17 (MHQRALLFSALLTAVRA). N62 carries N-linked (GlcNAc...) asparagine glycosylation. E227 serves as the catalytic Nucleophile. Residue E232 is the Proton donor of the active site. N285, N335, N402, and N445 each carry an N-linked (GlcNAc...) asparagine glycan.

It belongs to the glycosyl hydrolase 7 (cellulase C) family.

Its subcellular location is the secreted. The catalysed reaction is Hydrolysis of (1-&gt;4)-beta-D-glucosidic linkages in cellulose and cellotetraose, releasing cellobiose from the non-reducing ends of the chains.. In terms of biological role, the biological conversion of cellulose to glucose generally requires three types of hydrolytic enzymes: (1) Endoglucanases which cut internal beta-1,4-glucosidic bonds; (2) Exocellobiohydrolases that cut the disaccharide cellobiose from the non-reducing end of the cellulose polymer chain; (3) Beta-1,4-glucosidases which hydrolyze the cellobiose and other short cello-oligosaccharides to glucose. The sequence is that of 1,4-beta-D-glucan cellobiohydrolase A (cbhA) from Aspergillus niger.